Here is a 553-residue protein sequence, read N- to C-terminus: uncharacterized protein (553 aa).

5 helical membrane-spanning segments follow: residues alanine 13–leucine 30, glycine 37–isoleucine 59, serine 69–phenylalanine 91, leucine 98–threonine 120, and threonine 157–leucine 179. RCK C-terminal domains lie at leucine 190–glutamate 273 and lysine 281–asparagine 365. A run of 6 helical transmembrane segments spans residues leucine 375–glycine 397, valine 402–leucine 424, leucine 436–phenylalanine 458, leucine 468–phenylalanine 490, phenylalanine 497–leucine 514, and alanine 529–phenylalanine 551.

The protein belongs to the AAE transporter (TC 2.A.81) family.

The protein localises to the cell membrane. This is an uncharacterized protein from Bacteroides fragilis (strain YCH46).